The primary structure comprises 640 residues: uncharacterized protein (640 aa).

The next 14 helical transmembrane spans lie at 8-28 (GGVV…LGMF), 52-72 (LGGF…CYLI), 90-110 (LFVA…FLLA), 136-156 (LWYA…LVVL), 179-199 (VFML…LHAW), 208-228 (PSPV…YGIV), 241-261 (WWGL…VLQA), 277-297 (ENMG…DTGA), 298-318 (YGPA…HAAF), 352-372 (TVFF…AGFV), 391-411 (IVAL…GLSV), 446-466 (AIAA…APMV), 497-517 (IAPG…AVLA), and 619-639 (GSVH…LVVA).

It belongs to the complex I subunit 4 family.

It is found in the cell membrane. This is an uncharacterized protein from Mycobacterium tuberculosis (strain CDC 1551 / Oshkosh).